Consider the following 214-residue polypeptide: Cdc42 effector protein 2 (214 aa).

N-acetylserine is present on S2. The region spanning 30-44 (ISPPLGDFRHTIHIG) is the CRIB domain. 5 positions are modified to phosphoserine: S31, S101, S137, S141, and S145. The disordered stretch occupies residues 119-177 (LTLPTAQAPPKPPRLHLESPQPSPQPSPQGAGNVDVWRIPEAGSPHNGMSPEPEAEEPF).

This sequence belongs to the BORG/CEP family. As to quaternary structure, interacts with CDC42 and RHOQ in a GTP-dependent manner, and with SEPT7.

Its subcellular location is the endomembrane system. It localises to the cytoplasm. The protein localises to the cytoskeleton. Probably involved in the organization of the actin cytoskeleton. May act downstream of CDC42 to induce actin filament assembly leading to cell shape changes. Induces pseudopodia formation in fibroblasts in a CDC42-dependent manner. The chain is Cdc42 effector protein 2 (Cdc42ep2) from Mus musculus (Mouse).